We begin with the raw amino-acid sequence, 187 residues long: Glutathione peroxidase 7 (187 aa).

The N-terminal stretch at 1–19 is a signal peptide; it reads MVAATVAAAWLLLWAAACA. Residue cysteine 57 is part of the active site.

Belongs to the glutathione peroxidase family. In terms of tissue distribution, expressed in esophageal epithelial cells; expression is up-regulated after exposure to acidic bile acids.

Its subcellular location is the secreted. It carries out the reaction 2 glutathione + H2O2 = glutathione disulfide + 2 H2O. It protects esophageal epithelia from hydrogen peroxide-induced oxidative stress. It suppresses acidic bile acid-induced reactive oxygen species (ROS) and protects against oxidative DNA damage and double-strand breaks. This is Glutathione peroxidase 7 (GPX7) from Homo sapiens (Human).